The sequence spans 167 residues: Outer envelope pore protein 21A, chloroplastic (167 aa).

The Cytoplasmic segment spans residues 1-21 (METSLRYATNSRSLKIHAKEK). Residues 22 to 31 (FPVNSKTRLQ) form a beta stranded membrane-spanning segment. The Chloroplast intermembrane segment spans residues 32 to 55 (LHGELDTGAGVPSYFCAMIRYFFH). The beta stranded transmembrane segment at 56–65 (EASTNLGVGL) threads the bilayer. Over 66 to 71 (HYDKRE) the chain is Cytoplasmic. A beta stranded transmembrane segment spans residues 72 to 81 (KLRCLVRGKK). Topologically, residues 82–87 (KFPVIT) are chloroplast intermembrane. Residues 88–97 (DEVVTFNIKG) traverse the membrane as a beta stranded segment. Residues 98–110 (RCDFDQDLVQRNA) are Cytoplasmic-facing. Residues 111-120 (KGAAEFDWNI) form a beta stranded membrane-spanning segment. The Chloroplast intermembrane portion of the chain corresponds to 121 to 127 (WKFQKDQ). A beta stranded membrane pass occupies residues 128–137 (DLRLRIGYEM). The Cytoplasmic segment spans residues 138-142 (FEKVP). A beta stranded transmembrane segment spans residues 143-152 (YMQIRENNWT). Residues 153–158 (FNTNLK) are Chloroplast intermembrane-facing. A beta stranded transmembrane segment spans residues 159-167 (GKWNVRYDL).

It belongs to the plastid outer envelope porin OEP21 (TC 1.B.29) family.

The protein localises to the plastid. It is found in the etioplast membrane. It localises to the chloroplast outer membrane. Voltage-dependent rectifying anion channel that facilitates the translocation between chloroplast and cytoplasm of phosphorylated carbohydrates such as triosephosphate, 3-phosphoglycerate and inorganic phosphate (Pi) depending of ATP to triosephosphate ratio in the plastidial intermembrane space; in high triosephosphate/ATP conditions (e.g. photosynthesis), export of triosphosphate from chloroplast (outward rectifying channels), but in high ATP/triosephosphate conditions (e.g. dark phase), import of phosphosolutes (inward rectifying channels). The polypeptide is Outer envelope pore protein 21A, chloroplastic (OEP21A) (Arabidopsis thaliana (Mouse-ear cress)).